The primary structure comprises 259 residues: Deoxyribose-phosphate aldolase (259 aa).

The Proton donor/acceptor role is filled by Asp-102. The active-site Schiff-base intermediate with acetaldehyde is Lys-167. The active-site Proton donor/acceptor is the Lys-201.

This sequence belongs to the DeoC/FbaB aldolase family. DeoC type 2 subfamily.

The protein localises to the cytoplasm. It carries out the reaction 2-deoxy-D-ribose 5-phosphate = D-glyceraldehyde 3-phosphate + acetaldehyde. Its pathway is carbohydrate degradation; 2-deoxy-D-ribose 1-phosphate degradation; D-glyceraldehyde 3-phosphate and acetaldehyde from 2-deoxy-alpha-D-ribose 1-phosphate: step 2/2. Functionally, catalyzes a reversible aldol reaction between acetaldehyde and D-glyceraldehyde 3-phosphate to generate 2-deoxy-D-ribose 5-phosphate. In Photorhabdus laumondii subsp. laumondii (strain DSM 15139 / CIP 105565 / TT01) (Photorhabdus luminescens subsp. laumondii), this protein is Deoxyribose-phosphate aldolase.